Here is a 312-residue protein sequence, read N- to C-terminus: Porphobilinogen deaminase (312 aa).

An S-(dipyrrolylmethanemethyl)cysteine modification is found at Cys243.

The protein belongs to the HMBS family. In terms of assembly, monomer. The cofactor is dipyrromethane.

The enzyme catalyses 4 porphobilinogen + H2O = hydroxymethylbilane + 4 NH4(+). It participates in porphyrin-containing compound metabolism; protoporphyrin-IX biosynthesis; coproporphyrinogen-III from 5-aminolevulinate: step 2/4. Tetrapolymerization of the monopyrrole PBG into the hydroxymethylbilane pre-uroporphyrinogen in several discrete steps. The protein is Porphobilinogen deaminase of Vibrio campbellii (strain ATCC BAA-1116).